Here is a 269-residue protein sequence, read N- to C-terminus: tRNA pseudouridine synthase A (269 aa).

The active-site Nucleophile is the D51. Position 109 (Y109) interacts with substrate.

Belongs to the tRNA pseudouridine synthase TruA family. In terms of assembly, homodimer.

The catalysed reaction is uridine(38/39/40) in tRNA = pseudouridine(38/39/40) in tRNA. In terms of biological role, formation of pseudouridine at positions 38, 39 and 40 in the anticodon stem and loop of transfer RNAs. In Haemophilus influenzae (strain PittGG), this protein is tRNA pseudouridine synthase A.